Reading from the N-terminus, the 111-residue chain is 2Fe-2S ferredoxin (111 aa).

A 2Fe-2S ferredoxin-type domain is found at 5 to 107; the sequence is IKVTFVINNG…GIKVRLPSAT (103 aa). Cys-42, Cys-48, Cys-51, and Cys-88 together coordinate [2Fe-2S] cluster.

Belongs to the adrenodoxin/putidaredoxin family. The cofactor is [2Fe-2S] cluster.

Its function is as follows. Ferredoxin are iron-sulfur proteins that transfer electrons in a wide variety of metabolic reactions. This is 2Fe-2S ferredoxin (fdxB) from Rickettsia bellii (strain RML369-C).